We begin with the raw amino-acid sequence, 477 residues long: Ribulose bisphosphate carboxylase large chain (477 aa).

Residues 1-2 (MS) constitute a propeptide that is removed on maturation. Residue P3 is modified to N-acetylproline. An N6,N6,N6-trimethyllysine modification is found at K14. Substrate is bound by residues N123 and T173. K175 acts as the Proton acceptor in catalysis. A substrate-binding site is contributed by K177. K201, D203, and E204 together coordinate Mg(2+). K201 bears the N6-carboxylysine mark. The active-site Proton acceptor is the H294. The substrate site is built by R295, H327, and S379.

Belongs to the RuBisCO large chain family. Type I subfamily. Heterohexadecamer of 8 large chains and 8 small chains; disulfide-linked. The disulfide link is formed within the large subunit homodimers. Requires Mg(2+) as cofactor. The disulfide bond which can form in the large chain dimeric partners within the hexadecamer appears to be associated with oxidative stress and protein turnover.

It is found in the plastid. The protein resides in the chloroplast. It carries out the reaction 2 (2R)-3-phosphoglycerate + 2 H(+) = D-ribulose 1,5-bisphosphate + CO2 + H2O. It catalyses the reaction D-ribulose 1,5-bisphosphate + O2 = 2-phosphoglycolate + (2R)-3-phosphoglycerate + 2 H(+). In terms of biological role, ruBisCO catalyzes two reactions: the carboxylation of D-ribulose 1,5-bisphosphate, the primary event in carbon dioxide fixation, as well as the oxidative fragmentation of the pentose substrate in the photorespiration process. Both reactions occur simultaneously and in competition at the same active site. This is Ribulose bisphosphate carboxylase large chain from Nicotiana debneyi (Debney's tobacco).